The sequence spans 50 residues: Defensin-like protein 1 (50 aa).

Disulfide bonds link cysteine 3/cysteine 50, cysteine 14/cysteine 35, cysteine 20/cysteine 44, and cysteine 24/cysteine 46.

The protein belongs to the DEFL family.

It localises to the secreted. Functionally, possesses antimicrobial activity sensitive to inorganic cations. Has no inhibitory effect on insect gut alpha-amylase. Induces potential changes in fungal membranes and increased K+ efflux and Ca(2+) uptake. Interacts with sphingolipids and ergosterols found in fungal plasma membranes. The polypeptide is Defensin-like protein 1 (Dahlia merckii (Bedding dahlia)).